Consider the following 279-residue polypeptide: Secreted RxLR effector protein 152 (279 aa).

Positions Met-1–Ala-22 are cleaved as a signal peptide. The short motif at Arg-47–Arg-62 is the RxLR-dEER element.

It belongs to the RxLR effector family.

The protein resides in the secreted. It localises to the host nucleus. Its function is as follows. Secreted effector that completely suppresses the host cell death induced by cell death-inducing proteins. The polypeptide is Secreted RxLR effector protein 152 (Plasmopara viticola (Downy mildew of grapevine)).